We begin with the raw amino-acid sequence, 116 residues long: Large ribosomal subunit protein uL18 (116 aa).

The protein belongs to the universal ribosomal protein uL18 family. As to quaternary structure, part of the 50S ribosomal subunit; part of the 5S rRNA/L5/L18/L25 subcomplex. Contacts the 5S and 23S rRNAs.

This is one of the proteins that bind and probably mediate the attachment of the 5S RNA into the large ribosomal subunit, where it forms part of the central protuberance. The polypeptide is Large ribosomal subunit protein uL18 (Pseudomonas entomophila (strain L48)).